The chain runs to 353 residues: MISENLGENQTEKIPLKGRTLKELSEIMITLGEKPFRAKQIYHGLYVNRYETWDQFTTFSKIFKEKLEELCSLTHLQVVKQLKSVDGTQKFTFTSESGNGKEFEAVWIPSGDGGRKTICISSQIGCTLNCKFCATAKLEFQGNLKAHEIVDQILQVEKIVGDKATNVVFMGMGEPLHNYFNVIRAASIFHDPDALNLGAKRITISTSGVVNGIRRFIENKEPYNFAISLNHPDPKGRLQIMDIEEKFSLPELLQAAKDFTRELKRRITFEYVMIPGVNMGFENANKLVKIAKSLDCKINVIPLNTEFFGWRRPTREEIAEFIALLEPAGVPILNRRSPGKDIFGACGMLASKS.

Residue E104 is the Proton acceptor of the active site. A Radical SAM core domain is found at 112-341 (DGGRKTICIS…ILNRRSPGKD (230 aa)). A disulfide bridge links C119 with C346. Positions 126, 130, and 133 each coordinate [4Fe-4S] cluster. S-adenosyl-L-methionine is bound by residues 173–174 (GE), S205, 228–230 (SLN), and N304. C346 functions as the S-methylcysteine intermediate in the catalytic mechanism.

It belongs to the radical SAM superfamily. RlmN family. The cofactor is [4Fe-4S] cluster.

It is found in the cytoplasm. It carries out the reaction adenosine(2503) in 23S rRNA + 2 reduced [2Fe-2S]-[ferredoxin] + 2 S-adenosyl-L-methionine = 2-methyladenosine(2503) in 23S rRNA + 5'-deoxyadenosine + L-methionine + 2 oxidized [2Fe-2S]-[ferredoxin] + S-adenosyl-L-homocysteine. It catalyses the reaction adenosine(37) in tRNA + 2 reduced [2Fe-2S]-[ferredoxin] + 2 S-adenosyl-L-methionine = 2-methyladenosine(37) in tRNA + 5'-deoxyadenosine + L-methionine + 2 oxidized [2Fe-2S]-[ferredoxin] + S-adenosyl-L-homocysteine. Specifically methylates position 2 of adenine 2503 in 23S rRNA and position 2 of adenine 37 in tRNAs. This Leptospira interrogans serogroup Icterohaemorrhagiae serovar copenhageni (strain Fiocruz L1-130) protein is Probable dual-specificity RNA methyltransferase RlmN.